The following is a 1317-amino-acid chain: MTFYNYTIDKGRLKKLIALAYRRYGSARCSQLADELKELGFRFATKAGVSISVDDLTIPPEKKQMLEAAEKEIRTTEERYARGEITEVERFQKVIDTWNGTSEELKDQVVVNFRKTDPLNSVYMMAFSGARGNMSQVRQLVGMRGLMADPQGEIIDLPIKTNFREGLTVTEYVISSYGARKGLVDTALRTADSGYLTRRLVDVSQDVIVREQDCGTERSLRVTAMTDGDQVKISLADRLFGRLLAKDVVGPDGEIIAKRNDEIDEALANRIAAVTDEVYVRSPLTCEAARSVCQNCYGWSLAHGHKVDLGEAVGIIAAQSIGEPGTQLTMRTFHTGGVFTGEVARQEKAPEDGTVKWGKGLSTRKVRTRHGEDAEQVEIAGDLIWKGEGKKAATQTYSLTPGSLLFVQDGQTVTAGQLMTEISLSKTQRSTERATKDVAGDLAGEVLFDRLVPEEKTDRQGNTTRIAQRGGLVWILSGEVYNLPPGAEPVVKNDEQVEVGSIMAETKLVTNDGGVVRLVSNREIEIITASVLLDQAQVKLESSGGREQYVIYTADKQRFLLKAAPGTKVQNHSIVAELIDDRYRTTTGGMIRYAGVEVAKGGRKQGYEVTKGGTLLWIPEETHEINKDISLLIVEDGQYVEAGTEVVKDIFCQSSGIVEVVQKNDILREIIIKPGDFYQDVDPGSVKIESGQLLQPGQDVFPGVTVSTLSQAEWIESPEGNGLLLRPVEEYKVFDEPAAPSQGSQNEEGGRQIELRSVQRLFYKDGDRVKSVEGAPLLSTQLVLEIYGSGNEGISHLSADIELQDDEEEDCQRLQLVILESLVLRRDQESDPLGGASKTRLLVQDGDQIPPGAVVARTEIQCKEAGTVRGIKEGQESIRRVLLERAADRLVVDLPSAPEVKPGQLLVAGQELVPGVKLEESGKVLEINGKGDNYQLVLRRARPYRVSPGAVLHIEDGDLVQRGDNLVLLVFERAKTGDIVQGLPRIEELLEARKPKEACVLARAPGVCQVEYLEDESVDIKVVEDDGTVSEYPLLPGQNAMVTDGQRIDVGHALTDGYNNPHEILDVFFSYYVDKDGCYQAALRGLQAAQKFLVNEVQTVYQSQGVDISDKHIEVIVRQMTAKVRIDDGGDTTMLPGELVELRQVEQVNEAMGITGSAPARYTPVLLGITKASLNTDSFISAASFQETTRVLTEAAIEGKSDWLRGLKENVIIGRLIPAGTGFSSHEEVLGLIETQDDIQGYMIEPIELPTTKKKASATKVKTKKVEADDDLLDDTRARAYAGTQLSQDDEEFEETYDTDEDDFDMDDDDDFGDDED.

Residues Cys214, Cys286, Cys293, and Cys296 each contribute to the Zn(2+) site. Residues 1279–1317 are disordered; that stretch reads RAYAGTQLSQDDEEFEETYDTDEDDFDMDDDDDFGDDED. The segment covering 1288 to 1317 has biased composition (acidic residues); the sequence is QDDEEFEETYDTDEDDFDMDDDDDFGDDED.

It belongs to the RNA polymerase beta' chain family. RpoC2 subfamily. As to quaternary structure, in cyanobacteria the RNAP catalytic core is composed of 2 alpha, 1 beta, 1 beta', 1 gamma and 1 omega subunit. When a sigma factor is associated with the core the holoenzyme is formed, which can initiate transcription. Requires Zn(2+) as cofactor.

The catalysed reaction is RNA(n) + a ribonucleoside 5'-triphosphate = RNA(n+1) + diphosphate. Its function is as follows. DNA-dependent RNA polymerase catalyzes the transcription of DNA into RNA using the four ribonucleoside triphosphates as substrates. The polypeptide is DNA-directed RNA polymerase subunit beta' (Synechocystis sp. (strain ATCC 27184 / PCC 6803 / Kazusa)).